The following is a 941-amino-acid chain: Pre-mRNA-processing factor 6 (941 aa).

The disordered stretch occupies residues 1-79; the sequence is MNKKKKPFLG…DEDLNDTNYD (79 aa). Positions 39–65 are enriched in basic and acidic residues; sequence DANDPVDDRHAPPGKRTVGDQMKKNQA. The segment covering 66–78 has biased composition (acidic residues); sequence ADDDDEDLNDTNY. Ser-143 carries the phosphoserine modification. Phosphothreonine is present on residues Thr-180, Thr-266, and Thr-275. Ser-279 is modified (phosphoserine). HAT repeat units lie at residues 384–416, 418–444, 445–476, 554–586, 588–620, 622–654, 689–721, 723–755, and 855–887; these read TDIR…LEEP, DARI…ARLE, TYEN…LEEA, NALE…FEKN, GTRE…SKWL, GDVP…LESE, GNIS…IEEQ, ELME…LEEK, and RKIT…FELQ.

In terms of assembly, identified in the spliceosome B complex. Identified in the spliceosome C complex. Associates with the U5 snRNP particle. Component of the U4/U6-U5 tri-snRNP complex composed of the U4, U6 and U5 snRNAs and at least PRPF3, PRPF4, PRPF6, PRPF8, PRPF31, SNRNP200, TXNL4A, SNRNP40, DDX23, CD2BP2, PPIH, SNU13, EFTUD2, SART1 and USP39, LSm proteins LSm2-8 and Sm proteins. Interacts with ARAF1. Interacts with AR and NR3C1, but not ESR1, independently of the presence of hormones. Interacts with USH1G. Phosphorylated by PRP4K during spliceosome assembly.

It localises to the nucleus. Its subcellular location is the nucleoplasm. The protein resides in the nucleus speckle. In terms of biological role, involved in pre-mRNA splicing as component of the U4/U6-U5 tri-snRNP complex, one of the building blocks of the spliceosome. Enhances dihydrotestosterone-induced transactivation activity of AR, as well as dexamethasone-induced transactivation activity of NR3C1, but does not affect estrogen-induced transactivation. The protein is Pre-mRNA-processing factor 6 (Prpf6) of Mus musculus (Mouse).